The chain runs to 418 residues: Pyrophosphate--fructose 6-phosphate 1-phosphotransferase (418 aa).

Glycine 13 contacts diphosphate. Asparagine 111 contributes to the Mg(2+) binding site. Residues 139 to 141 (TID), 187 to 189 (MGR), glutamate 244, and 295 to 298 (YLQR) contribute to the substrate site. Aspartate 141 functions as the Proton acceptor in the catalytic mechanism.

It belongs to the phosphofructokinase type A (PFKA) family. PPi-dependent PFK group II subfamily. Clade 'B2' sub-subfamily. As to quaternary structure, homodimer. Mg(2+) serves as cofactor.

The protein localises to the cytoplasm. The enzyme catalyses beta-D-fructose 6-phosphate + diphosphate = beta-D-fructose 1,6-bisphosphate + phosphate + H(+). It participates in carbohydrate degradation; glycolysis; D-glyceraldehyde 3-phosphate and glycerone phosphate from D-glucose: step 3/4. Non-allosteric. Catalyzes the phosphorylation of D-fructose 6-phosphate, the first committing step of glycolysis. Uses inorganic phosphate (PPi) as phosphoryl donor instead of ATP like common ATP-dependent phosphofructokinases (ATP-PFKs), which renders the reaction reversible, and can thus function both in glycolysis and gluconeogenesis. Consistently, PPi-PFK can replace the enzymes of both the forward (ATP-PFK) and reverse (fructose-bisphosphatase (FBPase)) reactions. The chain is Pyrophosphate--fructose 6-phosphate 1-phosphotransferase from Xanthomonas campestris pv. campestris (strain B100).